A 510-amino-acid chain; its full sequence is MCGILGIVLANQTTPVAPELCDGCIFLQHRGQDAAGIATCGSRGRIYQCKGNGMARDVFTQQRVSGLAGSMGIAHLRYPTAGSSANSEAQPFYVNSPYGINLAHNGNLVNTASLKRYMDEDVHRHINTDSDSELLLNIFAAELEKHNKYRVNNEDVFHALEGVYRLCRGGYACVGLLAGFALFGFRDPNGIRPLLFGERENPDGTKDYMLASESVVFKAHNFTKYRDLKPGEAVIIPKNCSKGEPEFKQVVPINSYRPDLFEYVYFARPDSVLDGISVYHTRLAMGSKLAENILKQLKPEDIDVVIPVPDTARTCALECANVLGKPYREGFVKNRYVGRTFIMPNQRERVSSVRRKLNPMESEFKGKKVLIVDDSIVRGTTSKEIVNMAKESGATKVYFASAAPAIRYNHIYGIDLTDTKNLIAYNRTDEEVAEVIGCERVIYQSLEDLIDCCKTDKITKFEDGVFTGNYVTGVEDGYIQELEEKRESIANNSSDMKAEVDIGLYNCADY.

The active-site Nucleophile is cysteine 2. A Glutamine amidotransferase type-2 domain is found at 2–239 (CGILGIVLAN…PGEAVIIPKN (238 aa)). Positions 373 and 374 each coordinate Mg(2+).

This sequence in the C-terminal section; belongs to the purine/pyrimidine phosphoribosyltransferase family. The cofactor is Mg(2+).

It catalyses the reaction 5-phospho-beta-D-ribosylamine + L-glutamate + diphosphate = 5-phospho-alpha-D-ribose 1-diphosphate + L-glutamine + H2O. The protein operates within purine metabolism; IMP biosynthesis via de novo pathway; N(1)-(5-phospho-D-ribosyl)glycinamide from 5-phospho-alpha-D-ribose 1-diphosphate: step 1/2. The polypeptide is Amidophosphoribosyltransferase (ADE4) (Saccharomyces cerevisiae (strain ATCC 204508 / S288c) (Baker's yeast)).